A 303-amino-acid chain; its full sequence is Aspartate carbamoyltransferase catalytic subunit (303 aa).

Residues arginine 51 and threonine 52 each contribute to the carbamoyl phosphate site. Lysine 80 provides a ligand contact to L-aspartate. Carbamoyl phosphate is bound by residues arginine 101, histidine 129, and glutamine 132. L-aspartate is bound by residues arginine 162 and arginine 221. Positions 260 and 261 each coordinate carbamoyl phosphate.

It belongs to the aspartate/ornithine carbamoyltransferase superfamily. ATCase family. As to quaternary structure, heterooligomer of catalytic and regulatory chains.

It carries out the reaction carbamoyl phosphate + L-aspartate = N-carbamoyl-L-aspartate + phosphate + H(+). Its pathway is pyrimidine metabolism; UMP biosynthesis via de novo pathway; (S)-dihydroorotate from bicarbonate: step 2/3. Functionally, catalyzes the condensation of carbamoyl phosphate and aspartate to form carbamoyl aspartate and inorganic phosphate, the committed step in the de novo pyrimidine nucleotide biosynthesis pathway. The protein is Aspartate carbamoyltransferase catalytic subunit of Saccharolobus islandicus (strain M.16.27) (Sulfolobus islandicus).